The following is a 341-amino-acid chain: KRR1 small subunit processome component homolog (341 aa).

A KH domain is found at 126–194 (DIIKIGNLVH…VRDIVLETMN (69 aa)). Over residues 230–244 (KNKNISKRKQPKSRK) the composition is skewed to basic residues. The tract at residues 230-327 (KNKNISKRKQ…RPSEASKVDV (98 aa)) is disordered. A coiled-coil region spans residues 271 to 341 (FLNKEQKQAK…AKLLKANKQK (71 aa)). Basic and acidic residues-rich tracts occupy residues 272–303 (LNKEQKQAKRQQERVAKQAEAAKKQDERRNKD) and 313–327 (EQNRKRPSEASKVDV).

It belongs to the KRR1 family. Monomer. Component of the ribosomal small subunit (SSU) processome.

It is found in the nucleus. Its subcellular location is the nucleolus. Functionally, required for 40S ribosome biogenesis. Involved in nucleolar processing of pre-18S ribosomal RNA and ribosome assembly. Binds to RNA. Required for female germline development, cell viability during eye development and for survival of dividing cells and epithelial cells during early wing disk development. The chain is KRR1 small subunit processome component homolog from Drosophila grimshawi (Hawaiian fruit fly).